A 252-amino-acid polypeptide reads, in one-letter code: MITYEYPFNERIRTLLRLEDLFEKTAYFTQEDGALEHHAALVSMFEILEVAGRADLKMDLIQELERQRQTLLAFRNNPDISEEALSGALYEIEQSSAALLGMAGKIGQYLRENDWLMSIKSRAAIPGGVCEFDLPSYHWWLHRSPETRRDALEGWLKPMLPLRDAAAIVLRLLRSSGRPKNYTATNGQFQLNLGGSAAQMVRVTVHVDEQAIPEVSANKYFLNIRFTKPPAGEIKARGCERDVAFDLTFCNL.

This sequence belongs to the ZapD family. In terms of assembly, interacts with FtsZ.

The protein resides in the cytoplasm. In terms of biological role, cell division factor that enhances FtsZ-ring assembly. Directly interacts with FtsZ and promotes bundling of FtsZ protofilaments, with a reduction in FtsZ GTPase activity. In Dechloromonas aromatica (strain RCB), this protein is Cell division protein ZapD.